The sequence spans 1189 residues: Pumilio homolog 1 (1189 aa).

Ser-2 carries the N-acetylserine modification. Ser-19 bears the Phosphoserine mark. Residues 22-73 form a disordered region; it reads LKHHPQEPANPNMPVVLTSGTGSQAQPQPAANQALAAGTHSSPVPGSIGVAG. The span at 45–58 shows a compositional bias: low complexity; it reads QAQPQPAANQALAA. A phosphoserine mark is found at Ser-75, Ser-98, and Ser-106. At Thr-112 the chain carries Phosphothreonine. Ser-124, Ser-159, Ser-197, Ser-209, and Ser-229 each carry phosphoserine. Positions 233–272 are disordered; the sequence is SCLRKGGFGPRDADSDENDKGEKKNKGTFDGDKLGDLKEE. A compositionally biased stretch (basic and acidic residues) spans 250–272; that stretch reads NDKGEKKNKGTFDGDKLGDLKEE. Ser-305 is modified (phosphoserine). The segment covering 491-503 has biased composition (low complexity); it reads QQSAPQAQQGQQQ. Disordered stretches follow at residues 491–525 and 614–647; these read QQSA…GQQT and AGTT…SSFY. A compositionally biased stretch (polar residues) spans 512-525; it reads RPLTPNQNQQGQQT. Thr-515 is modified (phosphothreonine). The segment covering 627–647 has biased composition (low complexity); that stretch reads QQPQPQPQQQPSNNLASSSFY. Phosphoserine occurs at positions 710 and 715. The interval 743 to 773 is disordered; the sequence is GPVGMPLPSQGPGHSQTPPPSLSSHGSSSSL. Residues 764 to 773 show a composition bias toward low complexity; the sequence is LSSHGSSSSL. Arg-797 bears the Omega-N-methylarginine mark. 2 positions are modified to phosphoserine: Ser-807 and Ser-823. A PUM-HD domain is found at 829 to 1171; the sequence is GRSRLLEDFR…HILAKLEKYY (343 aa). Pumilio repeat units lie at residues 849 to 884, 885 to 920, 921 to 958, 959 to 994, 995 to 1030, 1031 to 1066, 1067 to 1102, and 1106 to 1145; these read EIAG…LVFN, EILQ…ALAE, RIRG…EMVR, ELDG…FIID, AFKG…PILE, ELHQ…KIVA, EIRG…VLID, and TMND…IVMH. The tract at residues 864–868 is adenine-nucleotide binding in RNA target; the sequence is SRFIQ. Residues 900-904 form a uracil-nucleotide binding in RNA target region; it reads NYVIQ. An adenine-nucleotide binding in RNA target region spans residues 936–940; it reads CRVIQ. Residues 974–978 are non-specific-nucleotide binding in RNA target; sequence NHVVQ. The tract at residues 1010 to 1014 is adenine-nucleotide binding in RNA target; sequence CRVIQ. Positions 1046–1050 are uracil-nucleotide binding in RNA target; sequence NYVIQ. 2 guanine-nucleotide binding in RNA target regions span residues 1082 to 1086 and 1083 to 1086; these read SNVVE and NVVE. The uracil-nucleotide binding in RNA target stretch occupies residues 1125-1129; the sequence is NYVVQ.

As to quaternary structure, recruits the CCR4-POP2-NOT deadenylase leading to translational inhibition and mRNA degradation. Interacts with TRIM71 (via NHL repeats) in an RNA-dependent manner. Post-translationally, phosphorylation at Ser-715 promotes RNA-binding activity. Following growth factor stimulation phosphorylated at Ser-715, promoting binding to the 3'-UTR of CDKN1B/p27 mRNA. Widely expressed. Expressed in brain, heart, kidney, liver, lung, skin, intestine, spleen, testis and thymus. Weakly or not expressed in muscles and stomach. Expressed at various stages of myeloid and lymphoid cell development. Highly expressed in testis. Expressed in all major brain regions (at protein level).

It is found in the cytoplasm. The protein localises to the P-body. Its subcellular location is the cytoplasmic granule. Sequence-specific RNA-binding protein that acts as a post-transcriptional repressor by binding the 3'-UTR of mRNA targets. Binds to an RNA consensus sequence, the Pumilio Response Element (PRE), 5'-UGUANAUA-3', that is related to the Nanos Response Element (NRE). Mediates post-transcriptional repression of transcripts via different mechanisms: acts via direct recruitment of the CCR4-POP2-NOT deadenylase leading to translational inhibition and mRNA degradation. Also mediates deadenylation-independent repression by promoting accessibility of miRNAs. Following growth factor stimulation, phosphorylated and binds to the 3'-UTR of CDKN1B/p27 mRNA, inducing a local conformational change that exposes miRNA-binding sites, promoting association of miR-221 and miR-222, efficient suppression of CDKN1B/p27 expression, and rapid entry to the cell cycle. Acts as a post-transcriptional repressor of E2F3 mRNAs by binding to its 3'-UTR and facilitating miRNA regulation. Represses a program of genes necessary to maintain genomic stability such as key mitotic, DNA repair and DNA replication factors. Its ability to repress those target mRNAs is regulated by the lncRNA NORAD (non-coding RNA activated by DNA damage) which, due to its high abundance and multitude of PUMILIO binding sites, is able to sequester a significant fraction of PUM1 and PUM2 in the cytoplasm. Involved in neuronal functions by regulating ATXN1 mRNA levels: acts by binding to the 3'-UTR of ATXN1 transcripts, leading to their down-regulation independently of the miRNA machinery. In testis, acts as a post-transcriptional regulator of spermatogenesis by binding to the 3'-UTR of mRNAs coding for regulators of p53/TP53. Involved in embryonic stem cell renewal by facilitating the exit from the ground state: acts by targeting mRNAs coding for naive pluripotency transcription factors and accelerates their down-regulation at the onset of differentiation. Binds specifically to miRNA MIR199A precursor, with PUM2, regulates miRNA MIR199A expression at a postranscriptional level. The polypeptide is Pumilio homolog 1 (Mus musculus (Mouse)).